We begin with the raw amino-acid sequence, 209 residues long: Uridine kinase (209 aa).

Residue Gly12–Thr19 participates in ATP binding.

It belongs to the uridine kinase family.

Its subcellular location is the cytoplasm. It catalyses the reaction uridine + ATP = UMP + ADP + H(+). The catalysed reaction is cytidine + ATP = CMP + ADP + H(+). Its pathway is pyrimidine metabolism; CTP biosynthesis via salvage pathway; CTP from cytidine: step 1/3. The protein operates within pyrimidine metabolism; UMP biosynthesis via salvage pathway; UMP from uridine: step 1/1. The protein is Uridine kinase of Streptococcus agalactiae serotype V (strain ATCC BAA-611 / 2603 V/R).